A 189-amino-acid chain; its full sequence is MKKIGLFGGTFDPPHNGHLLMANEVRFQVGLDEIWFIPNHKPPHKTDRKRADSRHRVKMVEAAIESNPHFRLELIEMEREGPSYTVDTVELLKKRHPEDEFFFMIGADMVEYLPKWHRIDDLLQMITFIGMKRPGYTGSTTYSLLFADVPAFDVSSTLIRQRIMQEKPVDYLLPKAVERYIKEHHLYES.

The protein belongs to the NadD family.

The enzyme catalyses nicotinate beta-D-ribonucleotide + ATP + H(+) = deamido-NAD(+) + diphosphate. It participates in cofactor biosynthesis; NAD(+) biosynthesis; deamido-NAD(+) from nicotinate D-ribonucleotide: step 1/1. Its function is as follows. Catalyzes the reversible adenylation of nicotinate mononucleotide (NaMN) to nicotinic acid adenine dinucleotide (NaAD). This chain is Probable nicotinate-nucleotide adenylyltransferase, found in Bacillus pumilus (strain SAFR-032).